The chain runs to 121 residues: Small ribosomal subunit protein bS16m (121 aa).

It belongs to the bacterial ribosomal protein bS16 family. As to quaternary structure, component of the mitochondrial small ribosomal subunit (mt-SSU). Mature yeast 74S mitochondrial ribosomes consist of a small (37S) and a large (54S) subunit. The 37S small subunit contains a 15S ribosomal RNA (15S mt-rRNA) and 34 different proteins. The 54S large subunit contains a 21S rRNA (21S mt-rRNA) and 46 different proteins.

Its subcellular location is the mitochondrion. In terms of biological role, component of the mitochondrial ribosome (mitoribosome), a dedicated translation machinery responsible for the synthesis of mitochondrial genome-encoded proteins, including at least some of the essential transmembrane subunits of the mitochondrial respiratory chain. The mitoribosomes are attached to the mitochondrial inner membrane and translation products are cotranslationally integrated into the membrane. The protein is Small ribosomal subunit protein bS16m (MRPS16) of Saccharomyces cerevisiae (strain ATCC 204508 / S288c) (Baker's yeast).